A 97-amino-acid polypeptide reads, in one-letter code: Large ribosomal subunit protein eL21 (97 aa).

It belongs to the eukaryotic ribosomal protein eL21 family.

This chain is Large ribosomal subunit protein eL21, found in Methanoculleus marisnigri (strain ATCC 35101 / DSM 1498 / JR1).